The primary structure comprises 54 residues: Photosystem II reaction center protein K (54 aa).

The propeptide occupies 1–17 (MFQISLDMISNKINLLG). The chain crosses the membrane as a helical span at residues 29 to 49 (IVDVLPIIPILFFLLAFVWQA).

It belongs to the PsbK family. As to quaternary structure, PSII is composed of 1 copy each of membrane proteins PsbA, PsbB, PsbC, PsbD, PsbE, PsbF, PsbH, PsbI, PsbJ, PsbK, PsbL, PsbM, PsbT, PsbY, PsbZ, Psb30/Ycf12, at least 3 peripheral proteins of the oxygen-evolving complex and a large number of cofactors. It forms dimeric complexes.

Its subcellular location is the plastid. It localises to the chloroplast thylakoid membrane. Functionally, one of the components of the core complex of photosystem II (PSII). PSII is a light-driven water:plastoquinone oxidoreductase that uses light energy to abstract electrons from H(2)O, generating O(2) and a proton gradient subsequently used for ATP formation. It consists of a core antenna complex that captures photons, and an electron transfer chain that converts photonic excitation into a charge separation. The chain is Photosystem II reaction center protein K from Euglena stellata.